Consider the following 364-residue polypeptide: MKSLLICLVLLELVWLGNGQSRDHQPLAPAFFVFGDSLVDSGNNNYIPTLARANYFPYGIDFGFPTGRFCNGRTVVDYGATYLGLPLVPPYLSPLSIGQNALRGVNYASAAAGILDETGRHYGARTTFNGQISQFEITIELRLRRFFQNPADLRKYLAKSIIGINIGSNDYINNYLMPERYSTSQTYSGEDYADLLIKTLSAQISRLYNLGARKMVLAGSGPLGCIPSQLSMVTGNNTSGCVTKINNMVSMFNSRLKDLANTLNTTLPGSFFVYQNVFDLFHDMVVNPSRYGLVVSNEACCGNGRYGGALTCLPLQQPCLDRNQYVFWDAFHPTETANKIIAHNTFSKSANYSYPISVYELAKL.

Residues 1-19 (MKSLLICLVLLELVWLGNG) form the signal peptide. Ser37 acts as the Nucleophile in catalysis. 3 N-linked (GlcNAc...) asparagine glycosylation sites follow: Asn236, Asn237, and Asn264. Catalysis depends on residues Asp329 and His332. The N-linked (GlcNAc...) asparagine glycan is linked to Asn351.

This sequence belongs to the 'GDSL' lipolytic enzyme family.

It is found in the secreted. The polypeptide is GDSL esterase/lipase 7 (GLIP7) (Arabidopsis thaliana (Mouse-ear cress)).